The primary structure comprises 315 residues: Putative steroid dehydrogenase 2 (315 aa).

47–76 (ASWAVVTGATDGIGKSYSFELARRGFNVYI) serves as a coordination point for NADP(+). Y202 is an active-site residue.

This sequence belongs to the short-chain dehydrogenases/reductases (SDR) family. 17-beta-HSD 3 subfamily.

The sequence is that of Putative steroid dehydrogenase 2 (stdh-2) from Caenorhabditis elegans.